The following is a 750-amino-acid chain: Photosystem I P700 chlorophyll a apoprotein A1 (750 aa).

Helical transmembrane passes span Val-70–Ala-93, Leu-156–His-179, Leu-195–Leu-219, Ile-291–Tyr-309, Trp-346–Tyr-369, Leu-385–Val-411, Ala-433–His-455, and Phe-531–Leu-549. Positions 573 and 582 each coordinate [4Fe-4S] cluster. The next 2 membrane-spanning stretches (helical) occupy residues His-589 to Trp-610 and Leu-664 to Phe-686. Chlorophyll a' is bound at residue His-675. Chlorophyll a contacts are provided by Met-683 and Tyr-691. A phylloquinone-binding site is contributed by Trp-692. The helical transmembrane segment at Ala-724–Ala-744 threads the bilayer.

The protein belongs to the PsaA/PsaB family. As to quaternary structure, the PsaA/B heterodimer binds the P700 chlorophyll special pair and subsequent electron acceptors. PSI consists of a core antenna complex that captures photons, and an electron transfer chain that converts photonic excitation into a charge separation. The eukaryotic PSI reaction center is composed of at least 11 subunits. Requires P700 is a chlorophyll a/chlorophyll a' dimer, A0 is one or more chlorophyll a, A1 is one or both phylloquinones and FX is a shared 4Fe-4S iron-sulfur center. as cofactor.

Its subcellular location is the plastid. The protein localises to the chloroplast thylakoid membrane. The catalysed reaction is reduced [plastocyanin] + hnu + oxidized [2Fe-2S]-[ferredoxin] = oxidized [plastocyanin] + reduced [2Fe-2S]-[ferredoxin]. Functionally, psaA and PsaB bind P700, the primary electron donor of photosystem I (PSI), as well as the electron acceptors A0, A1 and FX. PSI is a plastocyanin-ferredoxin oxidoreductase, converting photonic excitation into a charge separation, which transfers an electron from the donor P700 chlorophyll pair to the spectroscopically characterized acceptors A0, A1, FX, FA and FB in turn. Oxidized P700 is reduced on the lumenal side of the thylakoid membrane by plastocyanin. The polypeptide is Photosystem I P700 chlorophyll a apoprotein A1 (Agrostis stolonifera (Creeping bentgrass)).